Here is a 111-residue protein sequence, read N- to C-terminus: Cell division topological specificity factor (111 aa).

This sequence belongs to the MinE family.

Its function is as follows. Prevents the cell division inhibition by proteins MinC and MinD at internal division sites while permitting inhibition at polar sites. This ensures cell division at the proper site by restricting the formation of a division septum at the midpoint of the long axis of the cell. In Prochlorococcus marinus (strain MIT 9312), this protein is Cell division topological specificity factor.